The following is a 466-amino-acid chain: Asparagine--tRNA ligase (466 aa).

Belongs to the class-II aminoacyl-tRNA synthetase family. In terms of assembly, homodimer.

Its subcellular location is the cytoplasm. The catalysed reaction is tRNA(Asn) + L-asparagine + ATP = L-asparaginyl-tRNA(Asn) + AMP + diphosphate + H(+). The polypeptide is Asparagine--tRNA ligase (Salmonella choleraesuis (strain SC-B67)).